The primary structure comprises 227 residues: Cytochrome c oxidase subunit 2 (227 aa).

At 1–14 (MAYPLQLGLQDATS) the chain is on the mitochondrial intermembrane side. Residues 15-45 (PIMEELMNFHDHTLMIVFLISSLVLYIISLM) traverse the membrane as a helical segment. Over 46-59 (LTTKLTHTSTMDAQ) the chain is Mitochondrial matrix. The chain crosses the membrane as a helical span at residues 60 to 87 (EVETIWTILPAAILVLIALPSLRILYMM). Over 88 to 227 (DEINNPVLTV…YFENWSASMI (140 aa)) the chain is Mitochondrial intermembrane. The Cu cation site is built by His161, Cys196, Glu198, Cys200, His204, and Met207. Glu198 contributes to the Mg(2+) binding site. A Phosphotyrosine modification is found at Tyr218.

Belongs to the cytochrome c oxidase subunit 2 family. Component of the cytochrome c oxidase (complex IV, CIV), a multisubunit enzyme composed of 14 subunits. The complex is composed of a catalytic core of 3 subunits MT-CO1, MT-CO2 and MT-CO3, encoded in the mitochondrial DNA, and 11 supernumerary subunits COX4I, COX5A, COX5B, COX6A, COX6B, COX6C, COX7A, COX7B, COX7C, COX8 and NDUFA4, which are encoded in the nuclear genome. The complex exists as a monomer or a dimer and forms supercomplexes (SCs) in the inner mitochondrial membrane with NADH-ubiquinone oxidoreductase (complex I, CI) and ubiquinol-cytochrome c oxidoreductase (cytochrome b-c1 complex, complex III, CIII), resulting in different assemblies (supercomplex SCI(1)III(2)IV(1) and megacomplex MCI(2)III(2)IV(2)). Found in a complex with TMEM177, COA6, COX18, COX20, SCO1 and SCO2. Interacts with TMEM177 in a COX20-dependent manner. Interacts with COX20. Interacts with COX16. The cofactor is Cu cation.

It is found in the mitochondrion inner membrane. The catalysed reaction is 4 Fe(II)-[cytochrome c] + O2 + 8 H(+)(in) = 4 Fe(III)-[cytochrome c] + 2 H2O + 4 H(+)(out). In terms of biological role, component of the cytochrome c oxidase, the last enzyme in the mitochondrial electron transport chain which drives oxidative phosphorylation. The respiratory chain contains 3 multisubunit complexes succinate dehydrogenase (complex II, CII), ubiquinol-cytochrome c oxidoreductase (cytochrome b-c1 complex, complex III, CIII) and cytochrome c oxidase (complex IV, CIV), that cooperate to transfer electrons derived from NADH and succinate to molecular oxygen, creating an electrochemical gradient over the inner membrane that drives transmembrane transport and the ATP synthase. Cytochrome c oxidase is the component of the respiratory chain that catalyzes the reduction of oxygen to water. Electrons originating from reduced cytochrome c in the intermembrane space (IMS) are transferred via the dinuclear copper A center (CU(A)) of subunit 2 and heme A of subunit 1 to the active site in subunit 1, a binuclear center (BNC) formed by heme A3 and copper B (CU(B)). The BNC reduces molecular oxygen to 2 water molecules using 4 electrons from cytochrome c in the IMS and 4 protons from the mitochondrial matrix. The protein is Cytochrome c oxidase subunit 2 (MT-CO2) of Micaelamys namaquensis (Namaqua rock rat).